We begin with the raw amino-acid sequence, 86 residues long: Large ribosomal subunit protein bL27 (86 aa).

Positions 1 to 24 (MATKKAGGSSRNGRDSAGRRLGVK) are disordered.

The protein belongs to the bacterial ribosomal protein bL27 family.

This Rickettsia felis (strain ATCC VR-1525 / URRWXCal2) (Rickettsia azadi) protein is Large ribosomal subunit protein bL27.